Here is a 690-residue protein sequence, read N- to C-terminus: Protein-glucosylgalactosylhydroxylysine glucosidase (690 aa).

299-300 lines the substrate pocket; it reads WD. Glu-429 (proton donor) is an active-site residue. Position 497–498 (497–498) interacts with substrate; that stretch reads KQ.

The protein belongs to the glycosyl hydrolase 65 family.

It carries out the reaction (5R)-5-O-[alpha-D-glucosyl-(1-&gt;2)-beta-D-galactosyl]-5-hydroxy-L-lysyl-[collagen] + H2O = (5R)-5-O-(beta-D-galactosyl)-5-hydroxy-L-lysyl-[collagen] + D-glucose. Catalyzes the hydrolysis of glucose from the disaccharide unit linked to hydroxylysine residues of collagen and collagen-like proteins. In Mus musculus (Mouse), this protein is Protein-glucosylgalactosylhydroxylysine glucosidase.